A 625-amino-acid polypeptide reads, in one-letter code: Sorting nexin-41 (625 aa).

Residues M1–A90 form a disordered region. Low complexity predominate over residues S54–A86. One can recognise a PX domain in the interval V98–W235. A 1,2-diacyl-sn-glycero-3-phospho-(1D-myo-inositol-3-phosphate)-binding residues include R153, S155, K179, and R202. 2 coiled-coil regions span residues Q437–L469 and Q539–L563.

This sequence belongs to the sorting nexin family. In terms of assembly, binds to SNX4.

Its subcellular location is the prevacuolar compartment. The protein resides in the endosome. The protein localises to the endosome membrane. Its function is as follows. Involved in proper sorting of the v-SNARE protein SNC1. The chain is Sorting nexin-41 (SNX41) from Saccharomyces cerevisiae (strain ATCC 204508 / S288c) (Baker's yeast).